An 86-amino-acid chain; its full sequence is U15-lycotoxin-Ls1d (86 aa).

Residues 1–20 (MNSKIFAVLLLLAFLSCVLS) form the signal peptide. In terms of domain architecture, WAP spans 21–66 (DQYCPKSSITACKKMNIRNDCCKDDDCTGGSWCCATPCGNFCKYPT). 5 disulfide bridges follow: C24–C54, C32–C58, C41–C53, C42–C80, and C47–C62.

Belongs to the venom protein 11 family. 01 (wap-1) subfamily. In terms of processing, contains 5 disulfide bonds. As to expression, expressed by the venom gland.

The protein localises to the secreted. Has antibacterial activity. This chain is U15-lycotoxin-Ls1d, found in Lycosa singoriensis (Wolf spider).